A 375-amino-acid polypeptide reads, in one-letter code: Succinyl-diaminopimelate desuccinylase (375 aa).

His-66 contacts Zn(2+). Asp-68 is a catalytic residue. A Zn(2+)-binding site is contributed by Asp-99. Glu-133 acts as the Proton acceptor in catalysis. Zn(2+) contacts are provided by Glu-134, Glu-162, and His-348.

Belongs to the peptidase M20A family. DapE subfamily. Homodimer. Zn(2+) is required as a cofactor. The cofactor is Co(2+).

The enzyme catalyses N-succinyl-(2S,6S)-2,6-diaminopimelate + H2O = (2S,6S)-2,6-diaminopimelate + succinate. It participates in amino-acid biosynthesis; L-lysine biosynthesis via DAP pathway; LL-2,6-diaminopimelate from (S)-tetrahydrodipicolinate (succinylase route): step 3/3. Catalyzes the hydrolysis of N-succinyl-L,L-diaminopimelic acid (SDAP), forming succinate and LL-2,6-diaminopimelate (DAP), an intermediate involved in the bacterial biosynthesis of lysine and meso-diaminopimelic acid, an essential component of bacterial cell walls. This Escherichia coli O157:H7 protein is Succinyl-diaminopimelate desuccinylase.